A 1415-amino-acid polypeptide reads, in one-letter code: G8 domain-containing protein DDB_G0278975 (1415 aa).

The signal sequence occupies residues 1–24; it reads MKINKIILFFFLSCLYLFSSSVSA. The next 2 membrane-spanning stretches (helical) occupy residues 107–127 and 138–158; these read INLN…GLFT and LLFI…SIKI. Residues Asn-245, Asn-366, Asn-428, Asn-466, and Asn-579 are each glycosylated (N-linked (GlcNAc...) asparagine). Residues 566–692 enclose the G8 domain; it reads STWPNGIIPS…YHNTWSKLSA (127 aa). PbH1 repeat units lie at residues 819–841 and 842–864; these read LKNS…TIHG and TNNV…YLED. N-linked (GlcNAc...) asparagine glycosylation is found at Asn-844, Asn-985, Asn-1009, Asn-1023, Asn-1099, Asn-1244, and Asn-1342.

This sequence belongs to the comF family.

The protein localises to the membrane. The chain is G8 domain-containing protein DDB_G0278975 from Dictyostelium discoideum (Social amoeba).